A 189-amino-acid chain; its full sequence is Pyridoxal 5'-phosphate synthase subunit PdxT (189 aa).

47–49 (GES) contacts L-glutamine. The active-site Nucleophile is the C79. L-glutamine is bound by residues R106 and 135–136 (IR). Active-site charge relay system residues include H171 and E173.

It belongs to the glutaminase PdxT/SNO family. As to quaternary structure, in the presence of PdxS, forms a dodecamer of heterodimers. Only shows activity in the heterodimer.

It carries out the reaction aldehydo-D-ribose 5-phosphate + D-glyceraldehyde 3-phosphate + L-glutamine = pyridoxal 5'-phosphate + L-glutamate + phosphate + 3 H2O + H(+). The enzyme catalyses L-glutamine + H2O = L-glutamate + NH4(+). It functions in the pathway cofactor biosynthesis; pyridoxal 5'-phosphate biosynthesis. Functionally, catalyzes the hydrolysis of glutamine to glutamate and ammonia as part of the biosynthesis of pyridoxal 5'-phosphate. The resulting ammonia molecule is channeled to the active site of PdxS. The protein is Pyridoxal 5'-phosphate synthase subunit PdxT of Caldanaerobacter subterraneus subsp. tengcongensis (strain DSM 15242 / JCM 11007 / NBRC 100824 / MB4) (Thermoanaerobacter tengcongensis).